Here is a 192-residue protein sequence, read N- to C-terminus: ATP synthase protein MI25 (192 aa).

The chain crosses the membrane as a helical span at residues 29 to 49 (ISIYNEEMIVARCFIGFLIFS).

The protein belongs to the ATPase protein MI25 family. As to quaternary structure, F-type ATPases have 2 components, CF(1) - the catalytic core - and CF(0) - the membrane proton channel. CF(1) has five subunits: alpha(3), beta(3), gamma(1), delta(1), epsilon(1). CF(0) has three main subunits: a, b and c.

The protein localises to the mitochondrion membrane. This is one of the chains of the nonenzymatic component (CF(0) subunit) of the mitochondrial ATPase complex. The sequence is that of ATP synthase protein MI25 from Triticum timopheevii (Timopheev's wheat).